A 237-amino-acid polypeptide reads, in one-letter code: Ribosomal RNA small subunit methyltransferase G (237 aa).

Residues Gly78, Phe83, 129-130, and Arg148 each bind S-adenosyl-L-methionine; that span reads AE.

The protein belongs to the methyltransferase superfamily. RNA methyltransferase RsmG family.

It localises to the cytoplasm. Its function is as follows. Specifically methylates the N7 position of a guanine in 16S rRNA. This Streptococcus pyogenes serotype M18 (strain MGAS8232) protein is Ribosomal RNA small subunit methyltransferase G.